We begin with the raw amino-acid sequence, 468 residues long: UDP-N-acetylmuramate--L-alanine ligase (468 aa).

112–118 (GTHGKTT) contributes to the ATP binding site.

It belongs to the MurCDEF family.

It localises to the cytoplasm. It carries out the reaction UDP-N-acetyl-alpha-D-muramate + L-alanine + ATP = UDP-N-acetyl-alpha-D-muramoyl-L-alanine + ADP + phosphate + H(+). It participates in cell wall biogenesis; peptidoglycan biosynthesis. Its function is as follows. Cell wall formation. This Bordetella petrii (strain ATCC BAA-461 / DSM 12804 / CCUG 43448) protein is UDP-N-acetylmuramate--L-alanine ligase.